Consider the following 947-residue polypeptide: Protein translocase subunit SecA 1 (947 aa).

ATP is bound by residues Gln-83, 101–105 (GEGKT), and Asp-490. The disordered stretch occupies residues 860 to 947 (AKAQEQTGQG…KTSKPTRRRG (88 aa)). Basic and acidic residues predominate over residues 925-934 (TRRERREAAR). A compositionally biased stretch (basic residues) spans 935 to 947 (KQAKTSKPTRRRG).

This sequence belongs to the SecA family. As to quaternary structure, monomer and homodimer. Part of the essential Sec protein translocation apparatus which comprises SecA, SecYEG and auxiliary proteins SecDF. Other proteins may also be involved.

The protein resides in the cell membrane. It is found in the cytoplasm. It carries out the reaction ATP + H2O + cellular proteinSide 1 = ADP + phosphate + cellular proteinSide 2.. Its function is as follows. Part of the Sec protein translocase complex. Interacts with the SecYEG preprotein conducting channel. Has a central role in coupling the hydrolysis of ATP to the transfer of proteins into and across the cell membrane, serving as an ATP-driven molecular motor driving the stepwise translocation of polypeptide chains across the membrane. The chain is Protein translocase subunit SecA 1 from Mycobacterium sp. (strain KMS).